Reading from the N-terminus, the 68-residue chain is Large ribosomal subunit protein uL29 (68 aa).

The segment at 32-68 (QDQLKRRTGSLDNPAERTQHRRDLARVLTVLTQKTKA) is disordered. Positions 45-56 (PAERTQHRRDLA) are enriched in basic and acidic residues.

Belongs to the universal ribosomal protein uL29 family.

In Myxococcus xanthus (strain DK1622), this protein is Large ribosomal subunit protein uL29.